The following is a 554-amino-acid chain: MEPNKDDNVSLAATAQISAPPVLQDASSLPGFSAIPPVVPPSFPPPMAPIPMMPHPPVARPPTFRPPVSQNGGVKTSDSDSESDDEHIEISEESKQVRERQEKALQDLLVKRRAAAMAVPTNDKAVRDRLRRLGEPITLFGEQEMERRARLTQLLTRYDINGQLDKLVKDHEEDVTPKEEVDDEVLEYPFFTEGPKELREARIEIAKFSVKRAAVRIQRAKRRRDDPDEDMDAETKWALKHAKHMALDCSNFGDDRPLTGCSFSRDGKILATCSLSGVTKLWEMPQVTNTIAVLKDHKERATDVVFSPVDDCLATASADRTAKLWKTDGTLLQTFEGHLDRLARVAFHPSGKYLGTTSYDKTWRLWDINTGAELLLQEGHSRSVYGIAFQQDGALAASCGLDSLARVWDLRTGRSILVFQGHIKPVFSVNFSPNGYHLASGGEDNQCRIWDLRMRKSLYIIPAHANLVSQVKYEPQEGYFLATASYDMKVNIWSGRDFSLVKSLAGHESKVASLDITADSSCIATVSHDRTIKLWTSSGNDDEDEEKETMDIDL.

The span at 48–65 (APIPMMPHPPVARPPTFR) shows a compositional bias: pro residues. Residues 48 to 99 (APIPMMPHPPVARPPTFRPPVSQNGGVKTSDSDSESDDEHIEISEESKQVRE) are disordered. Residues 88–99 (IEISEESKQVRE) are compositionally biased toward basic and acidic residues. 7 WD repeats span residues 253-292 (GDDR…NTIA), 296-335 (DHKE…LQTF), 337-376 (GHLD…ELLL), 379-418 (GHSR…SILV), 421-460 (GHIK…SLYI), 463-503 (AHAN…LVKS), and 506-545 (GHES…DEDE).

The protein localises to the nucleus speckle. Its function is as follows. Participates in pre-mRNA splicing. Part of the U4/U5/U6 tri-snRNP complex, one of the building blocks of the spliceosome. Essential for reproduction. In female gametophyte, is necessary for the egg cell and central cell fate determination and hence reproductive success. Involved in a mechanism that prevents accessory cells from adopting gametic cell fate. Modulates egg cell signaling center that regulates the development of all female gametophytic cells. This is U4/U6 small nuclear ribonucleoprotein PRP4-like protein from Arabidopsis thaliana (Mouse-ear cress).